The sequence spans 330 residues: ATP-dependent (S)-NAD(P)H-hydrate dehydratase (330 aa).

In terms of domain architecture, YjeF C-terminal spans 36-327 (VIPLVRNTIP…QEINSAFKKL (292 aa)). Residues G136 and 189–195 (NFMEFTR) contribute to the (6S)-NADPHX site. ATP-binding positions include 229 to 233 (KGEED) and 248 to 257 (GSGRRCGGQG). A (6S)-NADPHX-binding site is contributed by D258.

Belongs to the NnrD/CARKD family. Mg(2+) is required as a cofactor.

The enzyme catalyses (6S)-NADHX + ATP = ADP + phosphate + NADH + H(+). The catalysed reaction is (6S)-NADPHX + ATP = ADP + phosphate + NADPH + H(+). Its function is as follows. Catalyzes the dehydration of the S-form of NAD(P)HX at the expense of ATP, which is converted to ADP. Together with NAD(P)HX epimerase, which catalyzes the epimerization of the S- and R-forms, the enzyme allows the repair of both epimers of NAD(P)HX, a damaged form of NAD(P)H that is a result of enzymatic or heat-dependent hydration. The sequence is that of ATP-dependent (S)-NAD(P)H-hydrate dehydratase from Danio rerio (Zebrafish).